The primary structure comprises 407 residues: Serine/threonine transporter SstT (407 aa).

9 helical membrane passes run 11–31, 43–63, 82–102, 141–161, 192–212, 216–236, 298–318, 339–359, and 363–383; these read IIHG…VILA, FLGD…VFVL, IISL…LLSF, ALMT…GIAL, LGIF…ALAG, LLMV…PLIV, MGGA…TLGV, ASGV…LFGI, and IAMQ…SAET.

The protein belongs to the dicarboxylate/amino acid:cation symporter (DAACS) (TC 2.A.23) family.

It localises to the cell inner membrane. It carries out the reaction L-serine(in) + Na(+)(in) = L-serine(out) + Na(+)(out). The enzyme catalyses L-threonine(in) + Na(+)(in) = L-threonine(out) + Na(+)(out). Its function is as follows. Involved in the import of serine and threonine into the cell, with the concomitant import of sodium (symport system). This is Serine/threonine transporter SstT from Shewanella denitrificans (strain OS217 / ATCC BAA-1090 / DSM 15013).